A 501-amino-acid chain; its full sequence is Flagellin (501 aa).

This sequence belongs to the bacterial flagellin family.

The protein localises to the secreted. It is found in the bacterial flagellum. Its function is as follows. Flagellin is the subunit protein which polymerizes to form the filaments of bacterial flagella. The chain is Flagellin (flaA) from Aquifex pyrophilus.